Consider the following 403-residue polypeptide: Probable tubulin--tyrosine ligase C12B10.04 (403 aa).

One can recognise a TTL domain in the interval 9 to 386; it reads KVYVNYRDEY…PFFESSTKRN (378 aa).

This sequence belongs to the tubulin--tyrosine ligase family. The cofactor is Mg(2+). It depends on K(+) as a cofactor.

The protein localises to the cytoplasm. It is found in the nucleus. It catalyses the reaction C-terminal L-alpha-aminoacyl-L-glutamyl-L-glutamyl-[tubulin] + L-tyrosine + ATP = C-terminal L-alpha-aminoacyl-L-glutamyl-L-glutamyl-L-tyrosyl-[tubulin] + ADP + phosphate + H(+). In terms of biological role, probable tubulin--tyrosine ligase. This chain is Probable tubulin--tyrosine ligase C12B10.04, found in Schizosaccharomyces pombe (strain 972 / ATCC 24843) (Fission yeast).